Here is a 350-residue protein sequence, read N- to C-terminus: S-adenosylmethionine:tRNA ribosyltransferase-isomerase (350 aa).

This sequence belongs to the QueA family. In terms of assembly, monomer.

The protein resides in the cytoplasm. The enzyme catalyses 7-aminomethyl-7-carbaguanosine(34) in tRNA + S-adenosyl-L-methionine = epoxyqueuosine(34) in tRNA + adenine + L-methionine + 2 H(+). It functions in the pathway tRNA modification; tRNA-queuosine biosynthesis. In terms of biological role, transfers and isomerizes the ribose moiety from AdoMet to the 7-aminomethyl group of 7-deazaguanine (preQ1-tRNA) to give epoxyqueuosine (oQ-tRNA). This chain is S-adenosylmethionine:tRNA ribosyltransferase-isomerase, found in Bacillus cereus (strain B4264).